The chain runs to 346 residues: Flap endonuclease 1 (346 aa).

The segment at 1–102 (MGVTELGKLI…AEIEERRKTR (102 aa)) is N-domain. Mg(2+) is bound by residues Asp-31, Asp-84, Glu-156, Glu-158, Asp-177, Asp-179, and Asp-239. The tract at residues 120–261 (DVAKYAKRAV…KALKLIWEFG (142 aa)) is I-domain.

It belongs to the XPG/RAD2 endonuclease family. FEN1 subfamily. As to quaternary structure, interacts with PCNA. PCNA stimulates the nuclease activity without altering cleavage specificity. The cofactor is Mg(2+).

Structure-specific nuclease with 5'-flap endonuclease and 5'-3' exonuclease activities involved in DNA replication and repair. During DNA replication, cleaves the 5'-overhanging flap structure that is generated by displacement synthesis when DNA polymerase encounters the 5'-end of a downstream Okazaki fragment. Binds the unpaired 3'-DNA end and kinks the DNA to facilitate 5' cleavage specificity. Cleaves one nucleotide into the double-stranded DNA from the junction in flap DNA, leaving a nick for ligation. Also involved in the base excision repair (BER) pathway. Acts as a genome stabilization factor that prevents flaps from equilibrating into structures that lead to duplications and deletions. Also possesses 5'-3' exonuclease activity on nicked or gapped double-stranded DNA. In Pyrobaculum aerophilum (strain ATCC 51768 / DSM 7523 / JCM 9630 / CIP 104966 / NBRC 100827 / IM2), this protein is Flap endonuclease 1.